A 377-amino-acid polypeptide reads, in one-letter code: Protein RecA (377 aa).

An ATP-binding site is contributed by 82 to 89 (GPESSGKT). The tract at residues 345-377 (EGSEVSANSMRPLASAARQASSRPNLSQVSANG) is disordered. The span at 362–377 (RQASSRPNLSQVSANG) shows a compositional bias: polar residues.

It belongs to the RecA family.

It is found in the cytoplasm. Its function is as follows. Can catalyze the hydrolysis of ATP in the presence of single-stranded DNA, the ATP-dependent uptake of single-stranded DNA by duplex DNA, and the ATP-dependent hybridization of homologous single-stranded DNAs. It interacts with LexA causing its activation and leading to its autocatalytic cleavage. In Prochlorococcus marinus (strain NATL2A), this protein is Protein RecA.